Reading from the N-terminus, the 281-residue chain is Lipoyl synthase (281 aa).

The [4Fe-4S] cluster site is built by C37, C42, C48, C63, C67, C70, and S274. The Radical SAM core domain occupies 49-263; sequence WSRGTATFMI…RQQAVNKGFK (215 aa).

Belongs to the radical SAM superfamily. Lipoyl synthase family. It depends on [4Fe-4S] cluster as a cofactor.

It is found in the cytoplasm. It catalyses the reaction [[Fe-S] cluster scaffold protein carrying a second [4Fe-4S](2+) cluster] + N(6)-octanoyl-L-lysyl-[protein] + 2 oxidized [2Fe-2S]-[ferredoxin] + 2 S-adenosyl-L-methionine + 4 H(+) = [[Fe-S] cluster scaffold protein] + N(6)-[(R)-dihydrolipoyl]-L-lysyl-[protein] + 4 Fe(3+) + 2 hydrogen sulfide + 2 5'-deoxyadenosine + 2 L-methionine + 2 reduced [2Fe-2S]-[ferredoxin]. The protein operates within protein modification; protein lipoylation via endogenous pathway; protein N(6)-(lipoyl)lysine from octanoyl-[acyl-carrier-protein]: step 2/2. In terms of biological role, catalyzes the radical-mediated insertion of two sulfur atoms into the C-6 and C-8 positions of the octanoyl moiety bound to the lipoyl domains of lipoate-dependent enzymes, thereby converting the octanoylated domains into lipoylated derivatives. In Parabacteroides distasonis (strain ATCC 8503 / DSM 20701 / CIP 104284 / JCM 5825 / NCTC 11152), this protein is Lipoyl synthase.